A 326-amino-acid polypeptide reads, in one-letter code: 2-dehydropantoate 2-reductase (326 aa).

Residues 7–12 (GAGAIG) and Asn103 each bind NADP(+). Residue Asn103 participates in substrate binding. Residue Lys205 is the Proton donor of the active site. Substrate-binding residues include Asn209, Asn213, and Ser274. Residue Glu286 coordinates NADP(+).

Belongs to the ketopantoate reductase family.

The protein localises to the cytoplasm. The enzyme catalyses (R)-pantoate + NADP(+) = 2-dehydropantoate + NADPH + H(+). It participates in cofactor biosynthesis; (R)-pantothenate biosynthesis; (R)-pantoate from 3-methyl-2-oxobutanoate: step 2/2. Functionally, catalyzes the NADPH-dependent reduction of ketopantoate into pantoic acid. The sequence is that of 2-dehydropantoate 2-reductase from Mesorhizobium japonicum (strain LMG 29417 / CECT 9101 / MAFF 303099) (Mesorhizobium loti (strain MAFF 303099)).